Here is a 554-residue protein sequence, read N- to C-terminus: Alpha-taxilin (554 aa).

The segment at 1 to 66 (MKNQDKKNGP…ARAKAAQPGA (66 aa)) is disordered. Ser-71 is modified (phosphoserine). A disordered region spans residues 85 to 166 (YCVDNNQGGP…RRPQEKKKAK (82 aa)). Over residues 91-103 (QGGPAEEGAQGEP) the composition is skewed to low complexity. The span at 143–158 (EEIRASDEVGDRDHRR) shows a compositional bias: basic and acidic residues. A coiled-coil region spans residues 186–491 (EEKLAALCKK…NKRVQDLTAG (306 aa)). Residues 492–554 (GITDIGSERR…GPGEPTPATA (63 aa)) are disordered. 2 positions are modified to phosphoserine: Ser-515 and Ser-523.

This sequence belongs to the taxilin family. Binds to the C-terminal coiled coil region of syntaxin family members STX1A, STX3A and STX4A, but not when these proteins are complexed with SNAP25, VAMP2 or STXBP1, suggesting that it interacts with syntaxins that do not form the SNARE complex.

Functionally, may be involved in intracellular vesicle traffic and potentially in calcium-dependent exocytosis in neuroendocrine cells. This is Alpha-taxilin (Txlna) from Mus musculus (Mouse).